Reading from the N-terminus, the 292-residue chain is MKILVPATSANLGPGFDCLGLSLKLFNETQIQKSGVFSISIGGEGSDNIFLKKNNIFVNIFYEIYEKLSGKKDNFRFIFQNNIPLSRGLGSSSAVIVGAIASAYYMSGFKVEKERILDEALIYENHPDNIAPATLGGFVCSLVEKNKVYSIKKEIDKDLAAVVVIPNLAMSTEQSRQALAKNLSFNDAVFNLSHASFLTACFLEKKYEFLKFASQDKLHEINRMKNLPELFEVQKFALENKALMSTLSGSGSSFFSLAFKDDALALAKKIQTKFKDFRVQYLEFDDNGFEIC.

84-94 (PLSRGLGSSSA) serves as a coordination point for ATP.

This sequence belongs to the GHMP kinase family. Homoserine kinase subfamily.

It is found in the cytoplasm. The catalysed reaction is L-homoserine + ATP = O-phospho-L-homoserine + ADP + H(+). The protein operates within amino-acid biosynthesis; L-threonine biosynthesis; L-threonine from L-aspartate: step 4/5. In terms of biological role, catalyzes the ATP-dependent phosphorylation of L-homoserine to L-homoserine phosphate. This Campylobacter jejuni subsp. jejuni serotype O:23/36 (strain 81-176) protein is Homoserine kinase.